Reading from the N-terminus, the 127-residue chain is Holo-[acyl-carrier-protein] synthase (127 aa).

Mg(2+)-binding residues include aspartate 9 and glutamate 58.

It belongs to the P-Pant transferase superfamily. AcpS family. Mg(2+) serves as cofactor.

The protein localises to the cytoplasm. The enzyme catalyses apo-[ACP] + CoA = holo-[ACP] + adenosine 3',5'-bisphosphate + H(+). Transfers the 4'-phosphopantetheine moiety from coenzyme A to a Ser of acyl-carrier-protein. This Shewanella sp. (strain MR-7) protein is Holo-[acyl-carrier-protein] synthase.